The sequence spans 31 residues: Acetyl-CoA carboxylase (31 aa).

Residues arginine 1–lysine 31 are disordered. Residues threonine 11–tyrosine 21 are compositionally biased toward basic and acidic residues.

The catalysed reaction is hydrogencarbonate + acetyl-CoA + ATP = malonyl-CoA + ADP + phosphate + H(+). It participates in lipid metabolism; malonyl-CoA biosynthesis; malonyl-CoA from acetyl-CoA: step 1/1. The sequence is that of Acetyl-CoA carboxylase from Catharanthus roseus (Madagascar periwinkle).